The following is a 122-amino-acid chain: Large ribosomal subunit protein bL12 (122 aa).

The protein belongs to the bacterial ribosomal protein bL12 family. Homodimer. Part of the ribosomal stalk of the 50S ribosomal subunit. Forms a multimeric L10(L12)X complex, where L10 forms an elongated spine to which 2 to 4 L12 dimers bind in a sequential fashion. Binds GTP-bound translation factors.

Its function is as follows. Forms part of the ribosomal stalk which helps the ribosome interact with GTP-bound translation factors. Is thus essential for accurate translation. The chain is Large ribosomal subunit protein bL12 from Deinococcus geothermalis (strain DSM 11300 / CIP 105573 / AG-3a).